A 254-amino-acid chain; its full sequence is Glutathione S-transferase U12 (254 aa).

Residues 19–23 (KKRKK) carry the Nuclear localization signal motif. Residues 33–114 (TTVKLIGTWA…YVDESWPSDL (82 aa)) enclose the GST N-terminal domain. Glutathione-binding positions include 43–44 (SP), 71–72 (GK), 85–86 (KV), and 98–99 (ES). A GST C-terminal domain is found at 120 to 252 (LPSERAFARF…EFIEFAKKKF (133 aa)).

This sequence belongs to the GST superfamily. Tau family.

The protein resides in the nucleus. It carries out the reaction RX + glutathione = an S-substituted glutathione + a halide anion + H(+). May be involved in the conjugation of reduced glutathione to a wide number of exogenous and endogenous hydrophobic electrophiles and have a detoxification role against certain herbicides. This Arabidopsis thaliana (Mouse-ear cress) protein is Glutathione S-transferase U12 (GSTU12).